Here is a 75-residue protein sequence, read N- to C-terminus: Insecticidal toxin OcyC10 (75 aa).

The first 19 residues, 1 to 19, serve as a signal peptide directing secretion; the sequence is MNFATKIVILLLVAALILA. 2 disulfides stabilise this stretch: C50-C62 and C56-C68.

As to expression, expressed by the venom gland.

Its subcellular location is the secreted. Insecticidal toxin. This is Insecticidal toxin OcyC10 from Opisthacanthus cayaporum (South American scorpion).